The chain runs to 405 residues: Tryptophan synthase beta chain (405 aa).

Lys98 bears the N6-(pyridoxal phosphate)lysine mark.

It belongs to the TrpB family. As to quaternary structure, tetramer of two alpha and two beta chains. It depends on pyridoxal 5'-phosphate as a cofactor.

The catalysed reaction is (1S,2R)-1-C-(indol-3-yl)glycerol 3-phosphate + L-serine = D-glyceraldehyde 3-phosphate + L-tryptophan + H2O. It participates in amino-acid biosynthesis; L-tryptophan biosynthesis; L-tryptophan from chorismate: step 5/5. Its function is as follows. The beta subunit is responsible for the synthesis of L-tryptophan from indole and L-serine. The protein is Tryptophan synthase beta chain of Bradyrhizobium diazoefficiens (strain JCM 10833 / BCRC 13528 / IAM 13628 / NBRC 14792 / USDA 110).